Reading from the N-terminus, the 274-residue chain is Hydroxyethylthiazole kinase (274 aa).

Residue M51 participates in substrate binding. ATP contacts are provided by R127 and S173. G200 is a substrate binding site.

This sequence belongs to the Thz kinase family. It depends on Mg(2+) as a cofactor.

It catalyses the reaction 5-(2-hydroxyethyl)-4-methylthiazole + ATP = 4-methyl-5-(2-phosphooxyethyl)-thiazole + ADP + H(+). Its pathway is cofactor biosynthesis; thiamine diphosphate biosynthesis; 4-methyl-5-(2-phosphoethyl)-thiazole from 5-(2-hydroxyethyl)-4-methylthiazole: step 1/1. Its function is as follows. Catalyzes the phosphorylation of the hydroxyl group of 4-methyl-5-beta-hydroxyethylthiazole (THZ). This Photobacterium profundum (strain SS9) protein is Hydroxyethylthiazole kinase.